A 267-amino-acid chain; its full sequence is Deoxyribose-phosphate aldolase (267 aa).

D123 functions as the Proton donor/acceptor in the catalytic mechanism. K185 serves as the catalytic Schiff-base intermediate with acetaldehyde. K217 serves as the catalytic Proton donor/acceptor.

Belongs to the DeoC/FbaB aldolase family. DeoC type 1 subfamily.

The protein localises to the cytoplasm. The catalysed reaction is 2-deoxy-D-ribose 5-phosphate = D-glyceraldehyde 3-phosphate + acetaldehyde. The protein operates within carbohydrate degradation; 2-deoxy-D-ribose 1-phosphate degradation; D-glyceraldehyde 3-phosphate and acetaldehyde from 2-deoxy-alpha-D-ribose 1-phosphate: step 2/2. In terms of biological role, catalyzes a reversible aldol reaction between acetaldehyde and D-glyceraldehyde 3-phosphate to generate 2-deoxy-D-ribose 5-phosphate. The protein is Deoxyribose-phosphate aldolase of Coccidioides immitis (strain RS) (Valley fever fungus).